A 1794-amino-acid polypeptide reads, in one-letter code: MSYPNQMNGSMYGYGANNGVQPGFDSYGMPINQGGMNYQQQTYPYQQPYQPDGYAGNTMLPFQQSQPATQFNNGFGYASQPTGSVADYGQQQQQMYGYNGMMPQTMNNTGFMQPQQTGAIPGFAPQPTGFVQPQPTGFMSQQPASFMQPQRTGGAGFIQPQRTGAMPAYQPQMNNFMQPQKTGGFAPQATGFMQTQPFGAAPSFAPQPTGFVQPQQTGVVMPPQPTGYLQAQPTGPFASFVQPQQTASFMPAAQPLKPQKTGQIHNSKAMDTRLSFVSAADQAKFEQLFKSAVGREEAMSSEIGKAILVRSKLPTVQLSKIWRLSDTTRSGRLLFPQFVLAMYLCNLGLTGKPIPDKVPDGILNEVNAMVDAISFSLDENYAKPTQPIPQAAAQQMAAQMFGGFQQAAGIPSQITGFQPQAMMPQRTGMQPQMTGFQQPMIPQRTGMQPQMTGFQQPMMPQRTGLQPQMTGFQQPMVPQRTGMQPQMTGFQQPMMPQRTGLQPQMTGFQQPMVPQRTGMQPMMPGLQQPMAPQRTGMQPMMPQRTGMQPQMTGFQQPMAPQRTGMQPMMPQRTGMQPQMPGMQQPMAPQRTGMQPMMPQRTGMQQPMAPQRTGMQPMMPQRTGMQPQMPGMQQPMAPQRTGMQPMMPQRTGMQPQMPGMQQPMAPQRTGMQPMAPQRTGMQPMMPQRTGMQPQMPGMQQPMAPQRTGMQPMMPQRTGMQPQMPGMQQPMAPQRTGMQPMAPQRTGMQPQMTGGPMLPQRTGGMAPQPTGMPGQWGFINTPLSNLPGIEALGQQMMPNAPSGGLNNTFQQKKDIPWAISKEEKRIYDQIFDAWDKERKGTLGGNAVLEIFGQSKLTRTELEHIWNLCDHGDKGSLDRDEFAVALHLIYRKLNGNEVPAVLPPELIPPSTRNFTESLNQVKNLIKNDTSNRKPFGAENQSKLKKNSFYDNPSETTEKDATLYRHNDSDASAYVSSARRRDFKEEKIESAPPIINDIDSEIASLKKRIHEKSLVVNALEDKKLAATPANDVQNDSLIYRIKSVQDEINRLSTSNKSPEVASMNVRLEELSTRVSKMLSDINEVDHTIASLSLKLFQAEDTKNSYDQTSPEATQERNRTISSKLAEMEKQKNESKAALEQMKNYVTNIENNIRAKLLPSAANDDAWLSQNVVDESVTRVVKELPVPAPAAPQTLNPPSVSTVQQSKPIESNTHTPEVKATSESPSASSNLEDRAARIKAEAQRRMNERLAALGIKPRQKGTPSPAPVNSATSTPVAAPTAQQIQPGKQASAVSSNVPAVSASISTPPAVVPTVQHPQPTKQIPTAAVKDPSTTSTSFNTAPIPQQAPLENQFSKMSLEPPVRPAVPTSPKPQIPDSSNVHAPPPPVQPMNAMPSHNAVNARPSAPERRDSFGSVSSGSNVSSIEDETSTMPLKASQPTNPGAPSNHAPQVVPPAPMHAVAPVQPKAPGMVTNAPAPSSAPAPPAPVSQLPPAVPNVPVPSMIPSVAQQPPSSVAPATAPSSTLPPSQSSFAHVPSPAPPAPQHPSAAALSSAPADNSMPHRSSPYAPQEPVQKPQAINNIAPATNLGTSQSFSPRMGPVNNSGSPLAMNAAGQPSLAVPAVPSAPSNHFNPFAKMQPPAPSPLQPSGHDSDNWSQHGDEEEEDSEDDIRSSKDAAALAAKLFGGMAPAHPVSTPPVRPQSAAPPQMSAPTPPPPPMSVPPPPSAPPMPAGPPSAPPPPLPASSAPSVPNPGDRSALLQQIHTGTRLKKTVTTDKSKPIAGRVLDASDGNSSAWYGNLS.

At Thr152 the chain carries Phosphothreonine. The 89-residue stretch at 281 to 369 (DQAKFEQLFK…DGILNEVNAM (89 aa)) folds into the EH 1 domain. An EF-hand 1 domain is found at 313–348 (LPTVQLSKIWRLSDTTRSGRLLFPQFVLAMYLCNLG). Residues 651–666 (GMQPQMPGMQQPMAPQ) are compositionally biased toward low complexity. The interval 651–674 (GMQPQMPGMQQPMAPQRTGMQPMA) is disordered. Thr706 is subject to Phosphothreonine. Residues 717–732 (GMQPQMPGMQQPMAPQ) are compositionally biased toward low complexity. Positions 717–747 (GMQPQMPGMQQPMAPQRTGMQPMAPQRTGMQ) are disordered. In terms of domain architecture, EH 2 spans 821-910 (EKRIYDQIFD…PELIPPSTRN (90 aa)). The region spanning 854–889 (LTRTELEHIWNLCDHGDKGSLDRDEFAVALHLIYRK) is the EF-hand 2 domain. The tract at residues 925–956 (DTSNRKPFGAENQSKLKKNSFYDNPSETTEKD) is disordered. Positions 1107–1151 (EATQERNRTISSKLAEMEKQKNESKAALEQMKNYVTNIENNIRAK) form a coiled coil. Disordered regions lie at residues 1183–1227 (APAA…SNLE), 1249–1287 (GIKP…QASA), and 1303–1794 (PAVV…GNLS). The segment covering 1188–1225 (QTLNPPSVSTVQQSKPIESNTHTPEVKATSESPSASSN) has biased composition (polar residues). 2 positions are modified to phosphoserine: Ser1219 and Ser1221. A compositionally biased stretch (low complexity) spans 1265 to 1276 (SATSTPVAAPTA). Residues 1326-1350 (PSTTSTSFNTAPIPQQAPLENQFSK) show a composition bias toward polar residues. Residues 1356-1368 (PVRPAVPTSPKPQ) are compositionally biased toward pro residues. Phosphoserine is present on residues Ser1406, Ser1409, Ser1412, and Ser1414. Composition is skewed to low complexity over residues 1407–1418 (FGSVSSGSNVSS), 1499–1530 (PSVA…AHVP), and 1539–1553 (HPSA…ADNS). Over residues 1571-1600 (QAINNIAPATNLGTSQSFSPRMGPVNNSGS) the composition is skewed to polar residues. Low complexity-rich tracts occupy residues 1610–1622 (PSLA…SAPS) and 1694–1704 (PQSAAPPQMSA). Residues 1705–1736 (PTPPPPPMSVPPPPSAPPMPAGPPSAPPPPLP) are compositionally biased toward pro residues. Positions 1737–1746 (ASSAPSVPNP) are enriched in low complexity. The WH2 domain occupies 1748 to 1765 (DRSALLQQIHTGTRLKKT). Polar residues predominate over residues 1783–1794 (DGNSSAWYGNLS).

It belongs to the PAN1 family. In terms of assembly, component of the PAN1 actin cytoskeleton-regulatory complex.

The protein resides in the cell membrane. It is found in the endosome membrane. The protein localises to the cytoplasm. Its subcellular location is the cytoskeleton. It localises to the actin patch. Its function is as follows. Component of the PAN1 actin cytoskeleton-regulatory complex required for the internalization of endosomes during actin-coupled endocytosis. The complex links the site of endocytosis to the cell membrane-associated actin cytoskeleton. Mediates uptake of external molecules and vacuolar degradation of plasma membrane proteins. Plays a role in the proper organization of the cell membrane-associated actin cytoskeleton and promotes its destabilization. This Schizosaccharomyces pombe (strain 972 / ATCC 24843) (Fission yeast) protein is Actin cytoskeleton-regulatory complex protein pan1 (pan1).